The following is a 232-amino-acid chain: 2,3-bisphosphoglycerate-dependent phosphoglycerate mutase (232 aa).

Residues 10-17, 23-24, Arg-62, 89-92, Lys-100, 116-117, and 185-186 each bind substrate; these read RHGESIWN, TG, ERHY, RR, and GN. His-11 functions as the Tele-phosphohistidine intermediate in the catalytic mechanism. Catalysis depends on Glu-89, which acts as the Proton donor/acceptor.

Belongs to the phosphoglycerate mutase family. BPG-dependent PGAM subfamily. As to quaternary structure, homodimer.

The enzyme catalyses (2R)-2-phosphoglycerate = (2R)-3-phosphoglycerate. It participates in carbohydrate degradation; glycolysis; pyruvate from D-glyceraldehyde 3-phosphate: step 3/5. Catalyzes the interconversion of 2-phosphoglycerate and 3-phosphoglycerate. The protein is 2,3-bisphosphoglycerate-dependent phosphoglycerate mutase of Buchnera aphidicola subsp. Baizongia pistaciae (strain Bp).